The primary structure comprises 187 residues: MEGVRPLEENVGNAPRPRFERNKLLLVASVVQALGLLLCLTYVCQHSHAPEVSLQYPPIENIMTQLQILTSHECEEDSFILPLQKRDGTMEVQNNSVVIQCDGFYLLSLKGYFSQEVSISLHYRKGEEPFPILKKTKFANSNVVLKLGYKDKVYLNVTTDSASCKQLSVNAGELIVILQNPGGYCAP.

Over 1–23 (MEGVRPLEENVGNAPRPRFERNK) the chain is Cytoplasmic. A helical; Signal-anchor for type II membrane protein membrane pass occupies residues 24 to 44 (LLLVASVVQALGLLLCLTYVC). Over 45 to 187 (QHSHAPEVSL…LQNPGGYCAP (143 aa)) the chain is Extracellular. The THD domain maps to 58–177 (PIENIMTQLQ…SVNAGELIVI (120 aa)). Cystine bridges form between C74/C164 and C101/C185. Residues N94 and N156 are each glycosylated (N-linked (GlcNAc...) asparagine).

It belongs to the tumor necrosis factor family. Homotrimer.

The protein localises to the membrane. Cytokine that binds to TNFRSF4. Co-stimulates T-cell proliferation and cytokine production. This chain is Tumor necrosis factor ligand superfamily member 4 (TNFSF4), found in Oryctolagus cuniculus (Rabbit).